We begin with the raw amino-acid sequence, 478 residues long: UDP-N-acetylmuramate--L-alanine ligase (478 aa).

120-126 serves as a coordination point for ATP; that stretch reads GSHGKTT.

Belongs to the MurCDEF family.

The protein localises to the cytoplasm. The catalysed reaction is UDP-N-acetyl-alpha-D-muramate + L-alanine + ATP = UDP-N-acetyl-alpha-D-muramoyl-L-alanine + ADP + phosphate + H(+). It functions in the pathway cell wall biogenesis; peptidoglycan biosynthesis. Its function is as follows. Cell wall formation. The polypeptide is UDP-N-acetylmuramate--L-alanine ligase (Rickettsia bellii (strain OSU 85-389)).